A 440-amino-acid polypeptide reads, in one-letter code: Xylose isomerase (440 aa).

Residues H101 and D104 contribute to the active site. 7 residues coordinate Mg(2+): E232, E268, H271, D296, D307, D309, and D339.

This sequence belongs to the xylose isomerase family. Homotetramer. Mg(2+) is required as a cofactor.

The protein localises to the cytoplasm. It carries out the reaction alpha-D-xylose = alpha-D-xylulofuranose. The chain is Xylose isomerase from Enterobacter sp. (strain 638).